Reading from the N-terminus, the 125-residue chain is Small ribosomal subunit protein uS13 (125 aa).

The protein belongs to the universal ribosomal protein uS13 family. In terms of assembly, part of the 30S ribosomal subunit. Forms a loose heterodimer with protein S19. Forms two bridges to the 50S subunit in the 70S ribosome.

Located at the top of the head of the 30S subunit, it contacts several helices of the 16S rRNA. In the 70S ribosome it contacts the 23S rRNA (bridge B1a) and protein L5 of the 50S subunit (bridge B1b), connecting the 2 subunits; these bridges are implicated in subunit movement. Contacts the tRNAs in the A and P-sites. This Orientia tsutsugamushi (strain Ikeda) (Rickettsia tsutsugamushi) protein is Small ribosomal subunit protein uS13.